The primary structure comprises 263 residues: Oxidoreductase tpcG (263 aa).

This sequence belongs to the avfA family. Specifically expressed in conidia.

It participates in secondary metabolite biosynthesis. Its function is as follows. Oxidoreductase; part of the gene cluster that mediates the biosynthesis of trypacidin, a mycotoxin with antiprotozoal activity and that plays a role in the infection process. The pathway begins with the synthesis of atrochrysone thioester by the polyketide synthase (PKS) tpcC. The atrochrysone carboxyl ACP thioesterase tpcB then breaks the thioester bond and releases the atrochrysone carboxylic acid from tpcC. The decarboxylase tpcK converts atrochrysone carboxylic acid to atrochrysone which is further reduced into emodin anthrone. The next step is performed by the emodin anthrone oxygenase tpcL that catalyzes the oxidation of emodinanthrone to emodin. Emodin O-methyltransferase encoded by tpcA catalyzes methylation of the 8-hydroxy group of emodin to form questin. Ring cleavage of questin by questin oxidase tpcI leads to desmethylsulochrin via several intermediates including questin epoxide. Another methylation step catalyzed by tpcM leads to the formation of sulochrin which is further converted to monomethylsulfochrin by tpcH. Finally, the tpcJ catalyzes the conversion of monomethylsulfochrin to trypacidin. Trypacidin is toxic for human pulmonary and bronchial epithelial cells by initiating the intracellular formation of nitric oxide (NO) and hydrogen peroxide (H(2)O(2)), thus triggering host necrotic cell death. The trypacidin pathway is also able to produce endocrocin via a distinct route from the endocrocin Enc pathway. This chain is Oxidoreductase tpcG, found in Aspergillus fumigatus (strain ATCC MYA-4609 / CBS 101355 / FGSC A1100 / Af293) (Neosartorya fumigata).